The sequence spans 168 residues: 2-C-methyl-D-erythritol 2,4-cyclodiphosphate synthase (168 aa).

Residues aspartate 15 and histidine 17 each contribute to the a divalent metal cation site. 4-CDP-2-C-methyl-D-erythritol 2-phosphate contacts are provided by residues 15–17 and 45–46; these read DVH and HS. Residue histidine 53 coordinates a divalent metal cation. 4-CDP-2-C-methyl-D-erythritol 2-phosphate-binding positions include 72–76, phenylalanine 150, and arginine 153; that span reads FPNSD.

The protein belongs to the IspF family. In terms of assembly, homotrimer. A divalent metal cation serves as cofactor.

The enzyme catalyses 4-CDP-2-C-methyl-D-erythritol 2-phosphate = 2-C-methyl-D-erythritol 2,4-cyclic diphosphate + CMP. Its pathway is isoprenoid biosynthesis; isopentenyl diphosphate biosynthesis via DXP pathway; isopentenyl diphosphate from 1-deoxy-D-xylulose 5-phosphate: step 4/6. Involved in the biosynthesis of isopentenyl diphosphate (IPP) and dimethylallyl diphosphate (DMAPP), two major building blocks of isoprenoid compounds. Catalyzes the conversion of 4-diphosphocytidyl-2-C-methyl-D-erythritol 2-phosphate (CDP-ME2P) to 2-C-methyl-D-erythritol 2,4-cyclodiphosphate (ME-CPP) with a corresponding release of cytidine 5-monophosphate (CMP). The chain is 2-C-methyl-D-erythritol 2,4-cyclodiphosphate synthase from Anaplasma phagocytophilum (strain HZ).